A 435-amino-acid polypeptide reads, in one-letter code: Diguanylate cyclase TpbB (435 aa).

Residues 1–22 (MNRRRRYTGSNPSLRRVLYRAH) are Cytoplasmic-facing. The helical transmembrane segment at 23–43 (LGVALVAVFTAGLAVTLVGLL) threads the bilayer. The Periplasmic segment spans residues 44–154 (TLRAYADPNQ…VKGSGGSLLR (111 aa)). The chain crosses the membrane as a helical span at residues 155–175 (FLLTGFAGMVLCLLLTALGAF). Residues 176–435 (YLSRRLVRGI…DSATPEAPPK (260 aa)) are Cytoplasmic-facing. In terms of domain architecture, HAMP spans 183–236 (RGIVGPLDQLAKVAHTVRRERDFEKRVPEAGIAELSQLGEDFNALLDELESWQA). In terms of domain architecture, GGDEF spans 279–415 (EQLAVLFIDS…GSRRLAELND (137 aa)). 2 residues coordinate Mg(2+): Ser-288 and Asp-330. Catalysis depends on Asp-330, which acts as the Proton acceptor. Residues 414-426 (NDPRILQEEKEID) are compositionally biased toward basic and acidic residues. A disordered region spans residues 414–435 (NDPRILQEEKEIDSATPEAPPK).

Mg(2+) is required as a cofactor. In terms of processing, phosphorylated at both Tyr residues and Ser/Thr residues. Dephosphorylated and inactivated by TpbA.

It localises to the cell inner membrane. The enzyme catalyses 2 GTP = 3',3'-c-di-GMP + 2 diphosphate. Its pathway is purine metabolism; 3',5'-cyclic di-GMP biosynthesis. Activity is tightly controlled by YfiR, a small periplasmic protein, and the OmpA/Pal-like outer-membrane lipoprotein YfiB. Diguanylate cyclase activity is inhibited by the specific interaction of YfiR with the TpbB periplasmic domain and is activated by YfiB, which releases the YfiR-mediated repression through sequestration of YfiR to the outer membrane. Activity is also controlled by dephosphorylation of the periplasmic domain by the tyrosine phosphatase TpbA. Its function is as follows. Catalyzes the synthesis of cyclic-di-GMP (c-di-GMP) via the condensation of 2 GTP molecules. Important for the regulation of biofilm maintenance when exposed to peroxide. In terms of biological role, part of the YfiB-TpbB-YfiR (or yfiBNR) system, encoding a tripartite signaling module that modulates intracellular c-di-GMP levels. The system is a key regulator of the small colony variant (SCV) phenotype, and plays an important role in biofilm formation and in vivo persistence. The c-di-GMP produced by TpbB/YfiN stimulates the production of the Pel and Psl exopolysaccharides, which promotes surface attachment, generates an SCV phenotype and confers resistance against phagocytosis. The polypeptide is Diguanylate cyclase TpbB (Pseudomonas aeruginosa (strain UCBPP-PA14)).